A 423-amino-acid polypeptide reads, in one-letter code: 3-isopropylmalate dehydratase large subunit 1 (423 aa).

[4Fe-4S] cluster-binding residues include C302, C362, and C365.

The protein belongs to the aconitase/IPM isomerase family. LeuC type 2 subfamily. Heterodimer of LeuC and LeuD. The cofactor is [4Fe-4S] cluster.

The catalysed reaction is (2R,3S)-3-isopropylmalate = (2S)-2-isopropylmalate. It functions in the pathway amino-acid biosynthesis; L-leucine biosynthesis; L-leucine from 3-methyl-2-oxobutanoate: step 2/4. Catalyzes the isomerization between 2-isopropylmalate and 3-isopropylmalate, via the formation of 2-isopropylmaleate. This Pyrococcus abyssi (strain GE5 / Orsay) protein is 3-isopropylmalate dehydratase large subunit 1.